The sequence spans 138 residues: ATP synthase epsilon chain (138 aa).

A compositionally biased stretch (basic and acidic residues) spans 89 to 114; that stretch reads KDTAQQEWNEAQKRLDEASKSGDRQK. Residues 89–117 form a disordered region; the sequence is KDTAQQEWNEAQKRLDEASKSGDRQKQIQ.

The protein belongs to the ATPase epsilon chain family. In terms of assembly, F-type ATPases have 2 components, CF(1) - the catalytic core - and CF(0) - the membrane proton channel. CF(1) has five subunits: alpha(3), beta(3), gamma(1), delta(1), epsilon(1). CF(0) has three main subunits: a, b and c.

It is found in the cellular thylakoid membrane. Produces ATP from ADP in the presence of a proton gradient across the membrane. The chain is ATP synthase epsilon chain from Gloeothece citriformis (strain PCC 7424) (Cyanothece sp. (strain PCC 7424)).